Reading from the N-terminus, the 75-residue chain is U6-lycotoxin-Ls1d (75 aa).

The signal sequence occupies residues M1–A21. Residues E22–R25 constitute a propeptide that is removed on maturation.

This sequence belongs to the neurotoxin 19 (CSTX) family. 06 (U6-Lctx) subfamily. In terms of processing, contains 4 disulfide bonds. In terms of tissue distribution, expressed by the venom gland.

The protein resides in the secreted. The polypeptide is U6-lycotoxin-Ls1d (Lycosa singoriensis (Wolf spider)).